The following is a 372-amino-acid chain: Saccharopine dehydrogenase [NAD(+), L-lysine-forming] (372 aa).

L-saccharopine-binding residues include arginine 18 and lysine 77. The active-site Proton acceptor is the lysine 77. The active-site Proton donor is the histidine 95. An L-saccharopine-binding site is contributed by glutamine 100. Residue arginine 129 participates in NAD(+) binding. L-saccharopine contacts are provided by arginine 130 and phenylalanine 134. NAD(+)-binding positions include 200–201, aspartate 224, threonine 228, tyrosine 248, and valine 275; that span reads GR. Cysteine 202 and cysteine 246 form a disulfide bridge. 276–278 serves as a coordination point for L-saccharopine; that stretch reads SAD. 316–319 contacts NAD(+); the sequence is IDHL.

The protein belongs to the AlaDH/PNT family. Monomer.

It catalyses the reaction L-saccharopine + NAD(+) + H2O = L-lysine + 2-oxoglutarate + NADH + H(+). It functions in the pathway amino-acid biosynthesis; L-lysine biosynthesis via AAA pathway; L-lysine from L-alpha-aminoadipate (fungal route): step 3/3. Its function is as follows. Catalyzes the NAD(+)-dependent cleavage of saccharopine to L-lysine and 2-oxoglutarate, the final step in the alpha-aminoadipate (AAA) pathway for lysin biosynthesis. In Neurospora crassa (strain ATCC 24698 / 74-OR23-1A / CBS 708.71 / DSM 1257 / FGSC 987), this protein is Saccharopine dehydrogenase [NAD(+), L-lysine-forming] (lys-4).